Consider the following 106-residue polypeptide: UPF0145 protein Dhaf_3855 (106 aa).

The protein belongs to the UPF0145 family.

This Desulfitobacterium hafniense (strain DSM 10664 / DCB-2) protein is UPF0145 protein Dhaf_3855.